The following is a 671-amino-acid chain: cGMP-dependent protein kinase 1 (671 aa).

Ser2 is modified (N-acetylserine). Residues 2–59 adopt a coiled-coil conformation; it reads SELEEDFAKILMLKEERIKELEKRLSEKEEEIQELKRKLHKCQSVLPVPSTHIGPRTT. The required for dimerization stretch occupies residues 2–102; the sequence is SELEEDFAKI…LIKEAILDND (101 aa). The segment at 9-44 is leucine-zipper; sequence AKILMLKEERIKELEKRLSEKEEEIQELKRKLHKCQ. Positions 50 to 75 are autoinhibitory domain; it reads PSTHIGPRTTRAQGISAEPQTYRSFH. Phosphothreonine; by autocatalysis is present on Thr59. The interval 103–220 is cGMP-binding, high affinity; the sequence is FMKNLELSQI…EYMEFLKSVP (118 aa). Residues 167–170 and 177–178 contribute to the 3',5'-cyclic AMP site; these read GELA and RT. 3',5'-cyclic GMP-binding positions include 167 to 170, 177 to 178, Arg282, 291 to 294, 301 to 302, and Tyr336; these read GELA, RT, and GEKA. Residues 221–341 form a cGMP-binding, low affinity region; the sequence is TFQSLPEEIL…SNKAYEDAEA (121 aa). One can recognise a Protein kinase domain in the interval 360–619; that stretch reads FNIIDTLGVG…VKDIQKHKWF (260 aa). Residues 366–374 and Lys390 contribute to the ATP site; that span reads LGVGGFGRV. Asp484 functions as the Proton acceptor in the catalytic mechanism. Thr515 bears the Phosphothreonine mark. The 52-residue stretch at 620-671 folds into the AGC-kinase C-terminal domain; it reads EGFNWEGLRKGTLTPPIIPSVASPTDTSNFDSFPEDNDEPPPDDNSGWDIDF. Positions 635 to 671 are disordered; the sequence is PIIPSVASPTDTSNFDSFPEDNDEPPPDDNSGWDIDF. The segment covering 652 to 661 has biased composition (acidic residues); it reads FPEDNDEPPP.

The protein belongs to the protein kinase superfamily. AGC Ser/Thr protein kinase family. cGMP subfamily. Isoform alpha: parallel homodimer or heterodimer and also heterotetramer. Interacts directly with PPP1R12A. Non-covalent dimer of dimer of PRKG1-PRKG1 and PPP1R12A-PPP1R12A. This interaction targets PRKG1 to stress fibers to mediate smooth muscle cell relaxation and vasodilation in responses to rises in cGMP. Isoform beta: antiparallel homodimer. Part of cGMP kinase signaling complex at least composed of ACTA2/alpha-actin, CNN1/calponin H1, PLN/phospholamban, PRKG1 and ITPR1. Interacts with IRAG1. Forms a stable complex with ITPR1, IRAG1, and isoform beta of PRKG1. Interacts with TRPC7 (via ankyrin repeat domain). Isoform alpha interacts with RGS2. Interacts with GTF2I. Post-translationally, autophosphorylation increases kinase activity. In terms of processing, 65 kDa monomer is produced by proteolytic cleavage. High concentrations are detected in various smooth muscle: lung, rumen, trachea, aorta, uterus and stomach. Isoform alpha is expressed predominantly in heart, cerebellum and lung, whereas the beta isoform is expressed in high concentrations in trachea, aorta, stomach and uterus.

It localises to the cytoplasm. It catalyses the reaction L-seryl-[protein] + ATP = O-phospho-L-seryl-[protein] + ADP + H(+). It carries out the reaction L-threonyl-[protein] + ATP = O-phospho-L-threonyl-[protein] + ADP + H(+). Its activity is regulated as follows. In the absence of cGMP, PRKG1 activity is suppressed by autoinhibitory contacts. Its function is as follows. Serine/threonine protein kinase that acts as a key mediator of the nitric oxide (NO)/cGMP signaling pathway. GMP binding activates PRKG1, which phosphorylates serines and threonines on many cellular proteins. Numerous protein targets for PRKG1 phosphorylation are implicated in modulating cellular calcium, but the contribution of each of these targets may vary substantially among cell types. Proteins that are phosphorylated by PRKG1 regulate platelet activation and adhesion, smooth muscle contraction, cardiac function, gene expression, feedback of the NO-signaling pathway, and other processes involved in several aspects of the CNS like axon guidance, hippocampal and cerebellar learning, circadian rhythm and nociception. Smooth muscle relaxation is mediated through lowering of intracellular free calcium, by desensitization of contractile proteins to calcium, and by decrease in the contractile state of smooth muscle or in platelet activation. Regulates intracellular calcium levels via several pathways: phosphorylates IRAG1 and inhibits IP3-induced Ca(2+) release from intracellular stores, phosphorylation of KCNMA1 (BKCa) channels decreases intracellular Ca(2+) levels, which leads to increased opening of this channel. PRKG1 phosphorylates the canonical transient receptor potential channel (TRPC) family which inactivates the associated inward calcium current. Another mode of action of NO/cGMP/PKGI signaling involves PKGI-mediated inactivation of the Ras homolog gene family member A (RhoA). Phosphorylation of RHOA by PRKG1 blocks the action of this protein in myriad processes: regulation of RHOA translocation; decreasing contraction; controlling vesicle trafficking, reduction of myosin light chain phosphorylation resulting in vasorelaxation. Activation of PRKG1 by NO signaling also alters gene expression in a number of tissues. In smooth muscle cells, increased cGMP and PRKG1 activity influence expression of smooth muscle-specific contractile proteins, levels of proteins in the NO/cGMP signaling pathway, down-regulation of the matrix proteins osteopontin and thrombospondin-1 to limit smooth muscle cell migration and phenotype. Regulates vasodilator-stimulated phosphoprotein (VASP) functions in platelets and smooth muscle. This is cGMP-dependent protein kinase 1 (PRKG1) from Bos taurus (Bovine).